We begin with the raw amino-acid sequence, 438 residues long: Transmembrane protease serine 11F (438 aa).

Residues 1 to 32 (MMYAPVEFSEAEFSRAEYQRKQQFWDSVRLAL) lie on the Cytoplasmic side of the membrane. Residues 33-53 (FTLAIVAIIGIAIGIVTHFVV) traverse the membrane as a helical; Signal-anchor for type II membrane protein segment. Topologically, residues 54–438 (EDDKSFYYLA…RDWIASKTGM (385 aa)) are extracellular. One can recognise an SEA domain in the interval 57-175 (KSFYYLASFK…PSFRLTPIDS (119 aa)). A Peptidase S1 domain is found at 206–437 (IVQGRETAME…YRDWIASKTG (232 aa)). A disulfide bridge connects residues Cys233 and Cys249. Catalysis depends on charge relay system residues His248 and Asp293. Intrachain disulfides connect Cys358/Cys374 and Cys385/Cys413. The active-site Charge relay system is Ser389.

Belongs to the peptidase S1 family.

It is found in the membrane. Functionally, probable serine protease. The protein is Transmembrane protease serine 11F (TMPRSS11F) of Homo sapiens (Human).